Consider the following 543-residue polypeptide: Bifunctional riboflavin biosynthesis protein RIBA 1, chloroplastic (543 aa).

A chloroplast-targeting transit peptide spans 1-56; the sequence is MSSINLSSSSPSTISLSRSRLSQSSTTLLHGLHRVTLPSNHPLSTFSIKTNTGKVK. Positions 57–328 are DHBP synthase; that stretch reads AAVISREDDL…IADLIRYRRK (272 aa). Residues 152 to 153, Asp-157, 267 to 271, and Glu-291 each bind D-ribulose 5-phosphate; these read RE and RAGHT. Glu-153 is a Mg(2+) binding site. His-270 lines the Mg(2+) pocket. Positions 329–543 are GTP cyclohydrolase II; it reads RDKLVERASA…VEKIESESES (215 aa). 379–383 lines the GTP pocket; sequence RVHSE. Positions 384, 395, and 397 each coordinate Zn(2+). GTP contacts are provided by residues Gln-400, 423 to 425, and Thr-445; that span reads EGR. Catalysis depends on Asp-457, which acts as the Proton acceptor; for GTP cyclohydrolase activity. The active-site Nucleophile; for GTP cyclohydrolase activity is the Arg-459. 2 residues coordinate GTP: Thr-480 and Lys-485.

This sequence in the N-terminal section; belongs to the DHBP synthase family. The protein in the C-terminal section; belongs to the GTP cyclohydrolase II family. Requires Mg(2+) as cofactor. Mn(2+) is required as a cofactor. Zn(2+) serves as cofactor. In terms of tissue distribution, expressed in leaves, shoots, roots, flowers and siliques.

Its subcellular location is the plastid. It is found in the chloroplast. The catalysed reaction is D-ribulose 5-phosphate = (2S)-2-hydroxy-3-oxobutyl phosphate + formate + H(+). It catalyses the reaction GTP + 4 H2O = 2,5-diamino-6-hydroxy-4-(5-phosphoribosylamino)-pyrimidine + formate + 2 phosphate + 3 H(+). It functions in the pathway cofactor biosynthesis; riboflavin biosynthesis; 2-hydroxy-3-oxobutyl phosphate from D-ribulose 5-phosphate: step 1/1. It participates in cofactor biosynthesis; riboflavin biosynthesis; 5-amino-6-(D-ribitylamino)uracil from GTP: step 1/4. In terms of biological role, involved in riboflavin biosynthesis. Catalyzes both the conversion of D-ribulose 5-phosphate to formate and 3,4-dihydroxy-2-butanone 4-phosphate and the conversion of GTP to 2,5-diamino-6-ribosylamino-4(3H)-pyrimidinone 5'-phosphate (DARP), formate and pyrophosphate. RIBA2 and RIBA3 together are not able to complement the loss of function of RIBA1. This is Bifunctional riboflavin biosynthesis protein RIBA 1, chloroplastic (RIBA1) from Arabidopsis thaliana (Mouse-ear cress).